The sequence spans 56 residues: MASKTSDVRPKITLACVECKERNYITKKNRRNDPDRMELSKFCPRCRKHTAHRETR.

This sequence belongs to the bacterial ribosomal protein bL33 family.

The sequence is that of Large ribosomal subunit protein bL33 from Nocardioides sp. (strain ATCC BAA-499 / JS614).